We begin with the raw amino-acid sequence, 62 residues long: DNA-directed RNA polymerase subunit Rpo10 (62 aa).

The Zn(2+) site is built by Cys6, Cys9, Cys43, and Cys44.

Belongs to the archaeal Rpo10/eukaryotic RPB10 RNA polymerase subunit family. In terms of assembly, part of the RNA polymerase complex. The cofactor is Zn(2+).

The protein resides in the cytoplasm. The catalysed reaction is RNA(n) + a ribonucleoside 5'-triphosphate = RNA(n+1) + diphosphate. Functionally, DNA-dependent RNA polymerase (RNAP) catalyzes the transcription of DNA into RNA using the four ribonucleoside triphosphates as substrates. This is DNA-directed RNA polymerase subunit Rpo10 from Methanosarcina acetivorans (strain ATCC 35395 / DSM 2834 / JCM 12185 / C2A).